The chain runs to 445 residues: 6-phosphogluconate dehydrogenase, decarboxylating (445 aa).

Residues 1-4, 22-24, 63-65, and Asn91 each bind NADP(+); these read AVMG, NRS, and VQA. Residues Asn91 and 117–119 each bind substrate; that span reads SGG. Lys172 acts as the Proton acceptor in catalysis. 175–176 is a substrate binding site; the sequence is HN. Glu179 (proton donor) is an active-site residue. Residues Tyr180, Lys249, Arg276, Arg434, and His440 each contribute to the substrate site.

This sequence belongs to the 6-phosphogluconate dehydrogenase family. Homodimer.

It carries out the reaction 6-phospho-D-gluconate + NADP(+) = D-ribulose 5-phosphate + CO2 + NADPH. It participates in carbohydrate degradation; pentose phosphate pathway; D-ribulose 5-phosphate from D-glucose 6-phosphate (oxidative stage): step 3/3. Functionally, catalyzes the oxidative decarboxylation of 6-phosphogluconate to ribulose 5-phosphate and CO(2), with concomitant reduction of NADP to NADPH. The protein is 6-phosphogluconate dehydrogenase, decarboxylating (gnd) of Pseudescherichia vulneris (Escherichia vulneris).